The sequence spans 463 residues: NADH dehydrogenase [ubiquinone] iron-sulfur protein 2, mitochondrial (463 aa).

The transit peptide at 1 to 33 directs the protein to the mitochondrion; that stretch reads MAALRALCGFRGVAAQVLRPGAGVRLPIQPSRG. K62 is subject to N6-acetyllysine. R118 carries the post-translational modification Symmetric dimethylarginine. [4Fe-4S] cluster contacts are provided by C326, C332, and C347.

The protein belongs to the complex I 49 kDa subunit family. Core subunit of respiratory chain NADH dehydrogenase (Complex I) which is composed of 45 different subunits. Component of the iron-sulfur (IP) fragment of the enzyme. Interacts with NDUFAF3. Interacts with NDUFAF7. Interacts with CERS2. [4Fe-4S] cluster serves as cofactor. In terms of processing, dimethylation at Arg-118 by NDUFAF7 takes place after NDUFS2 assembles into the complex I, leading to stabilize the early intermediate complex.

The protein resides in the mitochondrion inner membrane. The enzyme catalyses a ubiquinone + NADH + 5 H(+)(in) = a ubiquinol + NAD(+) + 4 H(+)(out). Its function is as follows. Core subunit of the mitochondrial membrane respiratory chain NADH dehydrogenase (Complex I) which catalyzes electron transfer from NADH through the respiratory chain, using ubiquinone as an electron acceptor. Essential for the catalytic activity of complex I. Essential for the assembly of complex I. Redox-sensitive, critical component of the oxygen-sensing pathway in the pulmonary vasculature which plays a key role in acute pulmonary oxygen-sensing and hypoxic pulmonary vasoconstriction. Plays an important role in carotid body sensing of hypoxia. Essential for glia-like neural stem and progenitor cell proliferation, differentiation and subsequent oligodendrocyte or neuronal maturation. In Homo sapiens (Human), this protein is NADH dehydrogenase [ubiquinone] iron-sulfur protein 2, mitochondrial (NDUFS2).